The sequence spans 383 residues: Cyclin-D4-2 (383 aa).

The segment covering 51–62 (AAGGGGGSGGGG) has biased composition (gly residues). Disordered regions lie at residues 51 to 70 (AAGG…EDMF), 313 to 335 (QPKP…PESP), and 354 to 383 (ATIA…KLSR). A compositionally biased stretch (low complexity) spans 323–335 (SASASSSSVPESP).

This sequence belongs to the cyclin family. Cyclin D subfamily.

The polypeptide is Cyclin-D4-2 (CYCD4-2) (Oryza sativa subsp. japonica (Rice)).